The primary structure comprises 282 residues: Phosphate import ATP-binding protein PstB (282 aa).

Residues 36-277 (IEVKNLNFFY…PARKETEDYI (242 aa)) enclose the ABC transporter domain. Residue 68–75 (GPSGCGKS) participates in ATP binding.

This sequence belongs to the ABC transporter superfamily. Phosphate importer (TC 3.A.1.7) family. As to quaternary structure, the complex is composed of two ATP-binding proteins (PstB), two transmembrane proteins (PstC and PstA) and a solute-binding protein (PstS).

The protein localises to the cell inner membrane. It carries out the reaction phosphate(out) + ATP + H2O = ADP + 2 phosphate(in) + H(+). In terms of biological role, part of the ABC transporter complex PstSACB involved in phosphate import. Responsible for energy coupling to the transport system. In Burkholderia pseudomallei (strain 1710b), this protein is Phosphate import ATP-binding protein PstB.